Reading from the N-terminus, the 71-residue chain is DNA-directed RNA polymerase subunit omega (71 aa).

It belongs to the RNA polymerase subunit omega family. In terms of assembly, the RNAP catalytic core consists of 2 alpha, 1 beta/beta' and 1 omega subunit. When a sigma factor is associated with the core the holoenzyme is formed, which can initiate transcription.

It carries out the reaction RNA(n) + a ribonucleoside 5'-triphosphate = RNA(n+1) + diphosphate. Its function is as follows. Promotes RNA polymerase assembly. Latches the N- and C-terminal regions of the beta' subunit thereby facilitating its interaction with the beta and alpha subunits. This Wolinella succinogenes (strain ATCC 29543 / DSM 1740 / CCUG 13145 / JCM 31913 / LMG 7466 / NCTC 11488 / FDC 602W) (Vibrio succinogenes) protein is DNA-directed RNA polymerase subunit omega.